The chain runs to 282 residues: Major surface antigen 4 (282 aa).

Residues Met-1–Ala-29 form the signal peptide.

This sequence belongs to the surface antigen msp4 family.

The polypeptide is Major surface antigen 4 (msp4) (Anaplasma marginale).